A 40-amino-acid polypeptide reads, in one-letter code: Beta-defensin 1 (40 aa).

3 disulfides stabilise this stretch: Cys7-Cys35, Cys14-Cys29, and Cys19-Cys36. Position 40 is a glycine amide (Gly40).

In terms of assembly, monomer. Homodimer.

It localises to the secreted. Its subcellular location is the membrane. Has antimicrobial activity against the Gram-positive bacteria methicillin-resistant S.aureus ATCC 33591 and L.monocytogenes EGD, the Gram-negative bacterium E.coli ML53p and the yeast C.albicans 820. Has no hemolytic activity towards human erythrocytes. The sequence is that of Beta-defensin 1 from Emys orbicularis (European pond turtle).